The following is a 398-amino-acid chain: Proteasome-activating nucleotidase (398 aa).

Positions 3 to 60 (DSEIQYLLEKLKKLEEDYYKLRELYRRLEDEKKFIESERIRYEREVRRLRSEVERLRS) form a coiled coil. ATP contacts are provided by residues 185-190 (GTGKTL) and H324. Positions 396-398 (MFV) are docks into pockets in the proteasome alpha-ring to cause gate opening.

It belongs to the AAA ATPase family. As to quaternary structure, homohexamer. The hexameric complex has a two-ring architecture resembling a top hat that caps the 20S proteasome core at one or both ends. Upon ATP-binding, the C-terminus of PAN interacts with the alpha-rings of the proteasome core by binding to the intersubunit pockets.

The protein localises to the cytoplasm. Functionally, ATPase which is responsible for recognizing, binding, unfolding and translocation of substrate proteins into the archaeal 20S proteasome core particle. Is essential for opening the gate of the 20S proteasome via an interaction with its C-terminus, thereby allowing substrate entry and access to the site of proteolysis. Thus, the C-termini of the proteasomal ATPase function like a 'key in a lock' to induce gate opening and therefore regulate proteolysis. Unfolding activity requires energy from ATP hydrolysis, whereas ATP binding alone promotes ATPase-20S proteasome association which triggers gate opening, and supports translocation of unfolded substrates. The sequence is that of Proteasome-activating nucleotidase from Archaeoglobus fulgidus (strain ATCC 49558 / DSM 4304 / JCM 9628 / NBRC 100126 / VC-16).